The sequence spans 98 residues: ESAT-6-like protein EsxM (98 aa).

It belongs to the WXG100 family. CFP-10 subfamily.

The protein resides in the secreted. This is ESAT-6-like protein EsxM (esxM) from Mycobacterium bovis (strain ATCC BAA-935 / AF2122/97).